A 365-amino-acid chain; its full sequence is H-2 class I histocompatibility antigen, D-D alpha chain (365 aa).

An N-terminal signal peptide occupies residues 1 to 24; that stretch reads MGAMAPRTLLLLLAAALGPTQTRA. Residues 25 to 114 form an alpha-1 region; that stretch reads GSHSLRYFVT…ALRYYNQSAG (90 aa). The Extracellular portion of the chain corresponds to 25–311; sequence GSHSLRYFVT…EPPSSTKTNT (287 aa). An N-linked (GlcNAc...) asparagine glycan is attached at asparagine 110. The segment at 115–206 is alpha-2; sequence GSHTLQWMAG…KNGNATLLRT (92 aa). The cysteines at positions 125 and 188 are disulfide-linked. A glycan (N-linked (GlcNAc...) asparagine) is linked at asparagine 200. The tract at residues 207-298 is alpha-3; it reads DPPKAHVTHH…GLPEPLTLRW (92 aa). In terms of domain architecture, Ig-like C1-type spans 209–297; it reads PKAHVTHHRR…EGLPEPLTLR (89 aa). Cysteine 227 and cysteine 283 are disulfide-bonded. The connecting peptide stretch occupies residues 299–311; that stretch reads GKEEPPSSTKTNT. The helical transmembrane segment at 312–334 threads the bilayer; sequence VIIAVPVVLGAVVILGAVMAFVM. The Cytoplasmic segment spans residues 335-365; it reads KRRRNTGGKGGDYALAPGSQSSDMSLPDCKV. A disordered region spans residues 343–365; sequence KGGDYALAPGSQSSDMSLPDCKV. Phosphoserine is present on residues serine 356 and serine 359.

The protein belongs to the MHC class I family. As to quaternary structure, heterodimer of an alpha chain and a beta chain (beta-2-microglobulin).

It is found in the membrane. In terms of biological role, involved in the presentation of foreign antigens to the immune system. The sequence is that of H-2 class I histocompatibility antigen, D-D alpha chain (H2-D1) from Mus musculus (Mouse).